The chain runs to 254 residues: Type III pantothenate kinase (254 aa).

Asp-6–Val-13 provides a ligand contact to ATP. Substrate contacts are provided by residues Tyr-100 and Gly-107–Arg-110. Residue Asp-109 is the Proton acceptor of the active site. Asp-129 is a binding site for K(+). Thr-132 is a binding site for ATP. Thr-184 serves as a coordination point for substrate.

It belongs to the type III pantothenate kinase family. Homodimer. Requires NH4(+) as cofactor. K(+) is required as a cofactor.

It localises to the cytoplasm. The enzyme catalyses (R)-pantothenate + ATP = (R)-4'-phosphopantothenate + ADP + H(+). It functions in the pathway cofactor biosynthesis; coenzyme A biosynthesis; CoA from (R)-pantothenate: step 1/5. Catalyzes the phosphorylation of pantothenate (Pan), the first step in CoA biosynthesis. In Anaeromyxobacter sp. (strain Fw109-5), this protein is Type III pantothenate kinase.